The sequence spans 396 residues: Purine ribonucleoside efflux pump NepI (396 aa).

At 1–21 the chain is on the cytoplasmic side; it reads MSEFIAENRGADAITRPNWSA. The chain crosses the membrane as a helical span at residues 22–42; it reads VFSVAFCVACLIIVEFLPVSL. Over 43–54 the chain is Periplasmic; sequence LTPMAQDLGISE. The helical transmembrane segment at 55 to 75 threads the bilayer; it reads GVAGQSVTVTAFVAMFASLFI. The Cytoplasmic segment spans residues 76–85; the sequence is TQTIQATDRR. A helical membrane pass occupies residues 86–106; it reads NVVILFAVLLTLSCLLVSFAN. Residue S107 is a topological domain, periplasmic. A helical membrane pass occupies residues 108 to 128; that stretch reads FSLLLIGRACLGLALGGFWAM. Over 129–147 the chain is Cytoplasmic; it reads SASLTMRLVPPRTVPKALS. A helical membrane pass occupies residues 148 to 168; sequence VIFGAVSIALVIAAPLGSFLG. Residues 169–175 are Periplasmic-facing; it reads ELIGWRN. A helical transmembrane segment spans residues 176–196; the sequence is VFNAAAVMGVLCIFWIIKSLP. At 197–215 the chain is on the cytoplasmic side; sequence SLPGEPSHQKQNTFRLLQR. A helical membrane pass occupies residues 216–236; sequence PGVMAGMIAIFMSFAGQFAFF. Over 237–255 the chain is Periplasmic; that stretch reads TYIRPVYMNLAGFSVDGLT. A helical membrane pass occupies residues 256-276; it reads LVLLSFGIASFIGTSLSSFIL. Over 277 to 281 the chain is Cytoplasmic; the sequence is KRSVK. A helical transmembrane segment spans residues 282-302; it reads LALAGAPLILAVSALVLTLWG. Residues 303–305 lie on the Periplasmic side of the membrane; that stretch reads SDK. Residues 306–326 form a helical membrane-spanning segment; the sequence is IVATGVAIIWGLTFALVPVGW. Residues 327–343 lie on the Cytoplasmic side of the membrane; it reads STWITRSLADQAEKAGS. The helical transmembrane segment at 344-364 threads the bilayer; sequence IQVAVIQLANTCGAAIGGYAL. Topologically, residues 365–366 are periplasmic; sequence DN. A helical membrane pass occupies residues 367-387; sequence IGLTSPLMFSGTLMLLTALLV. Residues 388 to 396 lie on the Cytoplasmic side of the membrane; it reads TAKVKMKKS.

Belongs to the major facilitator superfamily. DHA1 family. NepI (TC 2.A.1.2.26) subfamily.

It localises to the cell inner membrane. It carries out the reaction inosine(in) + H(+)(out) = inosine(out) + H(+)(in). It catalyses the reaction guanosine(in) + H(+)(out) = guanosine(out) + H(+)(in). Its function is as follows. Involved in the efflux of purine ribonucleosides, such as inosine and guanosine. The sequence is that of Purine ribonucleoside efflux pump NepI from Shigella sonnei (strain Ss046).